We begin with the raw amino-acid sequence, 517 residues long: Ribose import ATP-binding protein RbsA 2 (517 aa).

ABC transporter domains are found at residues 11–251 and 263–507; these read LEMR…VGRD and YDPG…ALAT. Position 43-50 (43-50) interacts with ATP; that stretch reads GENGAGKS.

Belongs to the ABC transporter superfamily. Ribose importer (TC 3.A.1.2.1) family. As to quaternary structure, the complex is composed of an ATP-binding protein (RbsA), two transmembrane proteins (RbsC) and a solute-binding protein (RbsB).

Its subcellular location is the cell inner membrane. The catalysed reaction is D-ribose(out) + ATP + H2O = D-ribose(in) + ADP + phosphate + H(+). In terms of biological role, part of the ABC transporter complex RbsABC involved in ribose import. Responsible for energy coupling to the transport system. This chain is Ribose import ATP-binding protein RbsA 2, found in Burkholderia pseudomallei (strain 1710b).